Consider the following 212-residue polypeptide: uncharacterized protein (212 aa).

The interval 42-101 is disordered; the sequence is GITGPKATKSPSRRTTRSPSPSRRTTRSSPSRRTTRSSPSRRTTRSPSPSGRRKQGGPAV. Low complexity predominate over residues 58–91; the sequence is RSPSPSRRTTRSSPSRRTTRSSPSRRTTRSPSPS.

The protein belongs to the IIV-6 378R family.

This is an uncharacterized protein from Invertebrate iridescent virus 3 (IIV-3).